The sequence spans 1062 residues: Inactive tyrosine-protein kinase 7 (1062 aa).

The signal sequence occupies residues Met1–Ala22. 7 Ig-like C2-type domains span residues Ala23 to Asn112, Pro120 to Ser210, Ala217 to Leu309, Pro301 to Thr399, Pro404 to Gln489, Lys495 to Leu578, and Gly570 to Leu672. At Ala23–Thr696 the chain is on the extracellular side. Cys45 and Cys93 are oxidised to a cystine. Residues Asn98, Asn108, Asn176, Asn206, Asn260, and Asn275 are each glycosylated (N-linked (GlcNAc...) asparagine). Cys142 and Cys192 form a disulfide bridge. Cystine bridges form between Cys238/Cys293 and Cys335/Cys383. N-linked (GlcNAc...) asparagine glycans are attached at residues Asn397, Asn455, Asn559, and Asn638. Disulfide bonds link Cys425-Cys473, Cys516-Cys562, and Cys605-Cys656. The helical transmembrane segment at Ile697 to Tyr717 threads the bilayer. The Cytoplasmic segment spans residues Cys718–Gln1062. Disordered regions lie at residues Gln728 to Gln750 and Asn1039 to Gln1062. The segment at Ala786–Gln1062 is interaction with CTNNB1. In terms of domain architecture, Protein kinase; inactive spans Leu788–Ala1058. Ser1056 carries the phosphoserine modification.

It belongs to the protein kinase superfamily. Tyr protein kinase family. Insulin receptor subfamily. In terms of assembly, interacts with CTNNB1. Post-translationally, MMP14 cleaves PTK7 between Pro-613 and Leu-614 generating an N-terminal soluble (70 kDa) fragment and a membrane C-terminal (50 kDa) fragment. Proteolysis by MMP14 regulates PTK7 function in non-canonical Wnt signaling pathway. In terms of tissue distribution, expressed at high levels in lung and un-pregnant uterus among adult tissues, and in the tail, limbs, somites, gut and craniofacial regions among embryonic tissues.

It localises to the membrane. It is found in the cell junction. Its function is as follows. Inactive tyrosine kinase involved in Wnt signaling pathway. Component of both the non-canonical (also known as the Wnt/planar cell polarity signaling) and the canonical Wnt signaling pathway. Functions in cell adhesion, cell migration, cell polarity, proliferation, actin cytoskeleton reorganization and apoptosis. Has a role in embryogenesis, epithelial tissue organization and angiogenesis. This is Inactive tyrosine-protein kinase 7 (Ptk7) from Mus musculus (Mouse).